A 414-amino-acid polypeptide reads, in one-letter code: MVLGKVKSLTISFDCLNDSNVPVYSSGDTVSGRVNLEVTGEIRVKSLKIHARGHAKVRWTESRNAGSNTAYTQNYTEEVEYFNHKDILIGHERDDDNCEEGFSTIHSGRHEYAFSFELPQTPLATSFEGRHGSVRYWVKAELHRPWLLPVKLKKEFTVFEHIDINTPSLLSPQAGTKEKTLCCWFCTSGPISLSAKIERKGYTPGESIQIFAEIENCSSRMVVPKAAIYQTQAFYAKGKMKEVKQLVANLRGESLSSGKTETWDGKLLKIPPVSPSILDCSIIRVEYSLMVYVDIPGAMDLLLSLPLVIGTIPLHPFGSRTSSVSSQCSMNMNWLGLSLPERPEAPPSYAEVVTEEQRRNNLAPVSACDDFERALQGPLFAYIQEFRFLPPPLYSEIDPNPDQSSEDRPSCPSR.

2 short sequence motifs (PPxY motif) span residues 346–349 (PPSY) and 391–394 (PPLY). Residues 393-414 (LYSEIDPNPDQSSEDRPSCPSR) form a disordered region. Residues 405-414 (SEDRPSCPSR) show a composition bias toward basic and acidic residues.

It belongs to the arrestin family. Interacts (via PPxY motifs) with NEDD4 (via WW domains). Interacts with ADRB2. Interacts with ADRB3. Interacts with HGS (via PPxY motifs). Does not bind TXN (thioredoxin). Interacts with ITCH.

It localises to the cytoplasm. Its subcellular location is the cell membrane. The protein localises to the lysosome. The protein resides in the endosome. It is found in the early endosome. Adapter protein that plays a role in regulating cell-surface expression of adrenergic receptors and probably also other G protein-coupled receptors. Plays a role in NEDD4-mediated ubiquitination and endocytosis af activated ADRB2 and subsequent ADRB2 degradation. May recruit NEDD4 to ADRB2. Alternatively, may function as adapter protein that does not play a major role in recruiting NEDD4 to ADRB2, but rather plays a role in a targeting ADRB2 to endosomes. This Rattus norvegicus (Rat) protein is Arrestin domain-containing protein 3 (Arrdc3).